The chain runs to 328 residues: Putative potassium channel protein YugO (328 aa).

3 helical membrane passes run 19–39, 42–62, and 73–93; these read IGVI…ILEP, FTSV…VGYG, and AAGI…FATL. In terms of domain architecture, RCK N-terminal spans 114–238; it reads RDHIILIGWN…ERAGANQIIG (125 aa).

It is found in the cell membrane. This chain is Putative potassium channel protein YugO (yugO), found in Bacillus subtilis (strain 168).